Here is a 240-residue protein sequence, read N- to C-terminus: Cysteine-rich venom protein triflin (240 aa).

The signal sequence occupies residues 1 to 19 (MIAFIVLPILAAVLQQSSG). One can recognise an SCP domain in the interval 39–166 (DLHNSLRRSV…KYSYFYVCQY (128 aa)). 8 disulfide bridges follow: Cys-75/Cys-153, Cys-92/Cys-167, Cys-148/Cys-164, Cys-186/Cys-193, Cys-189/Cys-198, Cys-202/Cys-235, Cys-211/Cys-229, and Cys-220/Cys-233. The 34-residue stretch at 202–235 (CTRENEFTNCDSLVQKSSCQDNYMKSKCPASCFC) folds into the ShKT domain.

This sequence belongs to the CRISP family. In terms of assembly, forms a stable, non-covalent complex with SSP-2. As to expression, expressed by the venom gland.

It is found in the secreted. Functionally, blocks contraction of smooth muscle elicited by high potassium-induced depolarization. May target voltage-gated calcium channels (Cav) on smooth muscle. The sequence is that of Cysteine-rich venom protein triflin from Protobothrops flavoviridis (Habu).